A 119-amino-acid chain; its full sequence is Large ribosomal subunit protein bL20 (119 aa).

It belongs to the bacterial ribosomal protein bL20 family.

Functionally, binds directly to 23S ribosomal RNA and is necessary for the in vitro assembly process of the 50S ribosomal subunit. It is not involved in the protein synthesizing functions of that subunit. In Afipia carboxidovorans (strain ATCC 49405 / DSM 1227 / KCTC 32145 / OM5) (Oligotropha carboxidovorans), this protein is Large ribosomal subunit protein bL20.